The following is a 188-amino-acid chain: Transcription factor FapR (188 aa).

The protein belongs to the FapR family.

In terms of biological role, transcriptional factor involved in regulation of membrane lipid biosynthesis by repressing genes involved in fatty acid and phospholipid metabolism. This is Transcription factor FapR from Bacillus licheniformis (strain ATCC 14580 / DSM 13 / JCM 2505 / CCUG 7422 / NBRC 12200 / NCIMB 9375 / NCTC 10341 / NRRL NRS-1264 / Gibson 46).